A 562-amino-acid polypeptide reads, in one-letter code: F-box only protein 33 (562 aa).

The F-box domain occupies 68-114 (AAGAASLPSELIVHIFSFLPAPDRLRASASCSHWRECLFYPALWPQL). Over residues 155-173 (GGGPGDGGSGGGTDTGTGG) the composition is skewed to gly residues. The interval 155–176 (GGGPGDGGSGGGTDTGTGGEDG) is disordered.

Part of the SCF (SKP1-CUL1-F-box) E3 ubiquitin-protein ligase complex SCF(FBXO33) formed of CUL1, SKP1, RBX1 and FBXO33. Interacts via its N-terminus with YBX1 CSD domain. Directly interacts with SKP1 and CUL1.

The protein operates within protein modification; protein ubiquitination. Functionally, substrate recognition component of a SCF (SKP1-CUL1-F-box protein) E3 ubiquitin-protein ligase complex which mediates the ubiquitination and subsequent proteasomal degradation of target proteins. Probably recognizes and binds to phosphorylated target proteins. Recognizes YBX1. The protein is F-box only protein 33 (Fbxo33) of Mus musculus (Mouse).